The following is a 200-amino-acid chain: Small ribosomal subunit protein uS4 (200 aa).

The interval Thr22–Lys43 is disordered. Residues Gln92–Glu170 enclose the S4 RNA-binding domain.

It belongs to the universal ribosomal protein uS4 family. In terms of assembly, part of the 30S ribosomal subunit. Contacts protein S5. The interaction surface between S4 and S5 is involved in control of translational fidelity.

Its function is as follows. One of the primary rRNA binding proteins, it binds directly to 16S rRNA where it nucleates assembly of the body of the 30S subunit. With S5 and S12 plays an important role in translational accuracy. The polypeptide is Small ribosomal subunit protein uS4 (Listeria monocytogenes serotype 4a (strain HCC23)).